We begin with the raw amino-acid sequence, 552 residues long: Lon protease 2 (552 aa).

97-104 contacts ATP; the sequence is GPPGVGKT. The 187-residue stretch at 349-535 folds into the Lon proteolytic domain; that stretch reads EPQVGIVNGL…QEVLDEILVN (187 aa). Active-site residues include Ser445 and Lys488.

This sequence belongs to the peptidase S16 family. As to quaternary structure, homohexamer. Organized in a ring with a central cavity.

It localises to the cytoplasm. The catalysed reaction is Hydrolysis of proteins in presence of ATP.. Functionally, ATP-dependent serine protease that mediates the selective degradation of mutant and abnormal proteins as well as certain short-lived regulatory proteins. Required for cellular homeostasis and for survival from DNA damage and developmental changes induced by stress. Degrades polypeptides processively to yield small peptide fragments that are 5 to 10 amino acids long. Binds to DNA in a double-stranded, site-specific manner. The sequence is that of Lon protease 2 (lon2) from Bacillus subtilis (strain 168).